A 298-amino-acid chain; its full sequence is uncharacterized protein (298 aa).

The protein belongs to the NAD(P)-dependent epimerase/dehydratase family.

This is an uncharacterized protein from Saccharomyces cerevisiae (strain ATCC 204508 / S288c) (Baker's yeast).